The chain runs to 394 residues: Acetate kinase (394 aa).

Mg(2+) is bound at residue Asn-7. Lys-14 contacts ATP. Arg-90 is a substrate binding site. The active-site Proton donor/acceptor is Asp-147. Residues His-204–Gly-208, Asp-278–Arg-280, and Gly-326–Asn-330 contribute to the ATP site. Glu-380 serves as a coordination point for Mg(2+).

This sequence belongs to the acetokinase family. Homodimer. It depends on Mg(2+) as a cofactor. Requires Mn(2+) as cofactor.

It is found in the cytoplasm. It carries out the reaction acetate + ATP = acetyl phosphate + ADP. The protein operates within metabolic intermediate biosynthesis; acetyl-CoA biosynthesis; acetyl-CoA from acetate: step 1/2. Its function is as follows. Catalyzes the formation of acetyl phosphate from acetate and ATP. Can also catalyze the reverse reaction. In Flavobacterium johnsoniae (strain ATCC 17061 / DSM 2064 / JCM 8514 / BCRC 14874 / CCUG 350202 / NBRC 14942 / NCIMB 11054 / UW101) (Cytophaga johnsonae), this protein is Acetate kinase.